A 399-amino-acid chain; its full sequence is V-set and immunoglobulin domain-containing protein 4 (399 aa).

The N-terminal stretch at 1 to 19 is a signal peptide; the sequence is MGILLGLLLLGHLTVDTYG. At 20–283 the chain is on the extracellular side; that stretch reads RPILEVPESV…TSAGPGKSLP (264 aa). Ig-like domains lie at 21 to 131 and 143 to 226; these read PILE…DKIT and PTVT…SDIV. 2 disulfides stabilise this stretch: C41–C113 and C165–C211. A helical transmembrane segment spans residues 284-304; that stretch reads VFAIILIISLCCMVVFTMAYI. Topologically, residues 305–399 are cytoplasmic; that stretch reads MLCRKTSQQE…FLATEGKSVC (95 aa).

As to expression, abundantly expressed in several fetal tissues. In adult tissues, highest expression in lung and placenta. Expressed in resting macrophages.

The protein localises to the membrane. Its function is as follows. Phagocytic receptor, strong negative regulator of T-cell proliferation and IL2 production. Potent inhibitor of the alternative complement pathway convertases. This chain is V-set and immunoglobulin domain-containing protein 4 (VSIG4), found in Homo sapiens (Human).